The following is a 261-amino-acid chain: Ribonuclease PH (261 aa).

Phosphate-binding positions include Arg87 and Gly125 to Arg127.

This sequence belongs to the RNase PH family. In terms of assembly, homohexameric ring arranged as a trimer of dimers.

The enzyme catalyses tRNA(n+1) + phosphate = tRNA(n) + a ribonucleoside 5'-diphosphate. Its function is as follows. Phosphorolytic 3'-5' exoribonuclease that plays an important role in tRNA 3'-end maturation. Removes nucleotide residues following the 3'-CCA terminus of tRNAs; can also add nucleotides to the ends of RNA molecules by using nucleoside diphosphates as substrates, but this may not be physiologically important. Probably plays a role in initiation of 16S rRNA degradation (leading to ribosome degradation) during starvation. This chain is Ribonuclease PH, found in Thermoanaerobacter pseudethanolicus (strain ATCC 33223 / 39E) (Clostridium thermohydrosulfuricum).